The primary structure comprises 330 residues: Protein IN CHLOROPLAST ATPASE BIOGENESIS, chloroplastic (330 aa).

Residues 1–35 (MGSISMHITPSTALPIRHFRARVSCCSSGHVSFIK) constitute a chloroplast transit peptide.

In terms of assembly, interacts with ATPC1.

It localises to the plastid. Its subcellular location is the chloroplast stroma. Its function is as follows. Involved in the assembly of the F(1) ATP synthase in chloroplast thylakoid membranes. Functions downstream of the CPN60 chaperones to promote assembly of the catalytically active core of the chloroplast ATP synthase. Assists the assembly of the ATP synthase gamma subunit into the active F(1) core downstream of CPN60-mediated folding, which is critical for the biogenesis of the chloroplast ATP synthase. The protein is Protein IN CHLOROPLAST ATPASE BIOGENESIS, chloroplastic of Arabidopsis thaliana (Mouse-ear cress).